A 320-amino-acid polypeptide reads, in one-letter code: Aspartate carbamoyltransferase catalytic subunit (320 aa).

Carbamoyl phosphate contacts are provided by arginine 57 and threonine 58. L-aspartate is bound at residue lysine 85. The carbamoyl phosphate site is built by arginine 107, histidine 141, and glutamine 144. 2 residues coordinate L-aspartate: arginine 174 and arginine 228. Residues glycine 269 and proline 270 each contribute to the carbamoyl phosphate site.

This sequence belongs to the aspartate/ornithine carbamoyltransferase superfamily. ATCase family. As to quaternary structure, heterododecamer (2C3:3R2) of six catalytic PyrB chains organized as two trimers (C3), and six regulatory PyrI chains organized as three dimers (R2).

The enzyme catalyses carbamoyl phosphate + L-aspartate = N-carbamoyl-L-aspartate + phosphate + H(+). It functions in the pathway pyrimidine metabolism; UMP biosynthesis via de novo pathway; (S)-dihydroorotate from bicarbonate: step 2/3. In terms of biological role, catalyzes the condensation of carbamoyl phosphate and aspartate to form carbamoyl aspartate and inorganic phosphate, the committed step in the de novo pyrimidine nucleotide biosynthesis pathway. This chain is Aspartate carbamoyltransferase catalytic subunit, found in Mycobacterium marinum (strain ATCC BAA-535 / M).